Here is a 233-residue protein sequence, read N- to C-terminus: Flagellar calcium-binding protein TB-17 (233 aa).

The segment covering 1 to 11 (MGCSGSKNASN) has biased composition (polar residues). The disordered stretch occupies residues 1-29 (MGCSGSKNASNPKDGAASKGGKDGKTTAD). Over residues 20-29 (GGKDGKTTAD) the composition is skewed to basic and acidic residues. EF-hand domains are found at residues 48 to 83 (ESKS…ILKL), 130 to 165 (YDIF…LKEW), and 167 to 202 (VDIT…KKLQ). The Ca(2+) site is built by aspartate 61, asparagine 63, threonine 65, lysine 67, glutamate 72, aspartate 143, aspartate 145, serine 147, glutamate 154, aspartate 180, asparagine 182, serine 184, and glutamate 191. The disordered stretch occupies residues 203 to 233 (VSGDPDDEENGANEGDGANAGDGVPAAEGSA). Residues 214-225 (ANEGDGANAGDG) are compositionally biased toward low complexity.

It belongs to the calflagin family.

Its subcellular location is the cell projection. It localises to the cilium. It is found in the flagellum. May contribute to the rapid motility of the trypanosomes, playing a role either in flagellar structure or in calcium metabolism. Could alternate between a GDP-bound inactive form to a calcium/GTP-bound active form. The polypeptide is Flagellar calcium-binding protein TB-17 (FCABP) (Trypanosoma brucei brucei).